The sequence spans 930 residues: Translation initiation factor IF-2 (930 aa).

A compositionally biased stretch (low complexity) spans 50–67 (FKPAAAPKVEAKPAAPKV). Disordered stretches follow at residues 50-217 (FKPA…SSEE) and 260-346 (EVVP…HELP). Basic and acidic residues-rich tracts occupy residues 68–90 (SAEK…EAKP) and 110–125 (FKAE…AERR). A compositionally biased stretch (low complexity) spans 129-141 (KGNNRDQQQNGNR). Composition is skewed to basic and acidic residues over residues 157 to 167 (RDNRRFNDQAK) and 262 to 295 (VPEK…DGPR). A compositionally biased stretch (low complexity) spans 309–318 (NQKNSNWNNN). Over residues 337 to 346 (VTERKFHELP) the composition is skewed to basic and acidic residues. Residues 432–599 (ERPPVVTIMG…TVLLVAEIQE (168 aa)) enclose the tr-type G domain. The tract at residues 441–448 (GHVDHGKT) is G1. 441–448 (GHVDHGKT) lines the GTP pocket. The tract at residues 466 to 470 (GITQH) is G2. The tract at residues 487–490 (DTPG) is G3. GTP contacts are provided by residues 487-491 (DTPGH) and 541-544 (NKID). Positions 541 to 544 (NKID) are G4. Positions 577 to 579 (SAK) are G5.

It belongs to the TRAFAC class translation factor GTPase superfamily. Classic translation factor GTPase family. IF-2 subfamily.

The protein localises to the cytoplasm. One of the essential components for the initiation of protein synthesis. Protects formylmethionyl-tRNA from spontaneous hydrolysis and promotes its binding to the 30S ribosomal subunits. Also involved in the hydrolysis of GTP during the formation of the 70S ribosomal complex. This Streptococcus pneumoniae (strain P1031) protein is Translation initiation factor IF-2.